We begin with the raw amino-acid sequence, 169 residues long: Der GTPase-activating protein YihI (169 aa).

2 disordered regions span residues 1-92 (MKPS…EKPM) and 146-169 (SYDD…LRGN). Basic residues predominate over residues 10–19 (SKGHAKARRK). Positions 20–30 (TREELDQEARD) are enriched in basic and acidic residues. The segment covering 31–40 (RKRQKKRRGH) has biased composition (basic residues). Over residues 49-58 (GNTTSGSKGQ) the composition is skewed to polar residues. Residues 147–159 (YDDDEEEEEDEKQ) show a composition bias toward acidic residues. Residues 160 to 169 (EDMMRLLRGN) show a composition bias toward basic and acidic residues.

The protein belongs to the YihI family. In terms of assembly, interacts with Der.

A GTPase-activating protein (GAP) that modifies Der/EngA GTPase function. May play a role in ribosome biogenesis. This Escherichia coli O1:K1 / APEC protein is Der GTPase-activating protein YihI.